Reading from the N-terminus, the 108-residue chain is Protein Asterix (108 aa).

The interval 1 to 29 (MNMTVDPRRKEKINRYKAPKNQGQSGGAN) is disordered. A helical transmembrane segment spans residues 80–96 (VLSSFMLSVSAVVMSYL).

The protein belongs to the Asterix family.

The protein resides in the membrane. The sequence is that of Protein Asterix from Drosophila melanogaster (Fruit fly).